A 145-amino-acid chain; its full sequence is Bacilliredoxin SH1401 (145 aa).

This sequence belongs to the bacilliredoxin family.

The chain is Bacilliredoxin SH1401 from Staphylococcus haemolyticus (strain JCSC1435).